Consider the following 61-residue polypeptide: Large ribosomal subunit protein uL30 (61 aa).

It belongs to the universal ribosomal protein uL30 family. In terms of assembly, part of the 50S ribosomal subunit.

This is Large ribosomal subunit protein uL30 from Teredinibacter turnerae (strain ATCC 39867 / T7901).